The following is a 319-amino-acid chain: Ribosomal RNA large subunit methyltransferase F (319 aa).

The protein belongs to the methyltransferase superfamily. METTL16/RlmF family.

The protein localises to the cytoplasm. It carries out the reaction adenosine(1618) in 23S rRNA + S-adenosyl-L-methionine = N(6)-methyladenosine(1618) in 23S rRNA + S-adenosyl-L-homocysteine + H(+). Its function is as follows. Specifically methylates the adenine in position 1618 of 23S rRNA. This Aliivibrio fischeri (strain ATCC 700601 / ES114) (Vibrio fischeri) protein is Ribosomal RNA large subunit methyltransferase F.